The following is a 249-amino-acid chain: Triosephosphate isomerase (249 aa).

Residue 9 to 11 (NWK) participates in substrate binding. His94 serves as the catalytic Electrophile. Glu166 functions as the Proton acceptor in the catalytic mechanism. Substrate contacts are provided by residues Gly172 and 232–233 (GG).

The protein belongs to the triosephosphate isomerase family. In terms of assembly, homodimer.

It is found in the cytoplasm. The catalysed reaction is D-glyceraldehyde 3-phosphate = dihydroxyacetone phosphate. It functions in the pathway carbohydrate biosynthesis; gluconeogenesis. The protein operates within carbohydrate degradation; glycolysis; D-glyceraldehyde 3-phosphate from glycerone phosphate: step 1/1. Functionally, involved in the gluconeogenesis. Catalyzes stereospecifically the conversion of dihydroxyacetone phosphate (DHAP) to D-glyceraldehyde-3-phosphate (G3P). This Xylella fastidiosa (strain 9a5c) protein is Triosephosphate isomerase.